The sequence spans 1056 residues: Carbamoyl phosphate synthase large chain (1056 aa).

The interval 1–399 (MKIDVSKVIV…AFQKAIRMLD (399 aa)) is carboxyphosphate synthetic domain. The ATP site is built by Arg127, Arg167, Gly173, Gly174, Lys206, Leu208, Glu213, Gly239, Val240, His241, Gln282, and Glu296. Residues 131 to 325 (QKTMKKVGLP…LAYIATKLAI (195 aa)) enclose the ATP-grasp 1 domain. Mg(2+) is bound by residues Gln282, Glu296, and Asn298. Positions 282, 296, and 298 each coordinate Mn(2+). Residues 400–536 (IGDELIGKYY…VTYDGVENDI (137 aa)) form an oligomerization domain region. The carbamoyl phosphate synthetic domain stretch occupies residues 537–919 (PKPKKPSILV…LKSWLSVKPN (383 aa)). The ATP-grasp 2 domain maps to 661-849 (SKLLEKLGIP…LMELSAQAVL (189 aa)). The ATP site is built by Arg697, Lys736, Ile738, Glu742, Gly766, Val767, His768, Ser769, Gln809, and Glu820. Residues Gln809, Glu820, and Asn822 each coordinate Mg(2+). Mn(2+)-binding residues include Gln809, Glu820, and Asn822. The MGS-like domain maps to 915-1043 (SVKPNELPKT…REYWIRKIEE (129 aa)). Positions 920–1056 (ELPKTSALIY…EYAASVVLRR (137 aa)) are allosteric domain.

It belongs to the CarB family. In terms of assembly, composed of two chains; the small (or glutamine) chain promotes the hydrolysis of glutamine to ammonia, which is used by the large (or ammonia) chain to synthesize carbamoyl phosphate. Tetramer of heterodimers (alpha,beta)4. Mg(2+) is required as a cofactor. Mn(2+) serves as cofactor.

It carries out the reaction hydrogencarbonate + L-glutamine + 2 ATP + H2O = carbamoyl phosphate + L-glutamate + 2 ADP + phosphate + 2 H(+). It catalyses the reaction hydrogencarbonate + NH4(+) + 2 ATP = carbamoyl phosphate + 2 ADP + phosphate + 2 H(+). It functions in the pathway amino-acid biosynthesis; L-arginine biosynthesis; carbamoyl phosphate from bicarbonate: step 1/1. Its pathway is pyrimidine metabolism; UMP biosynthesis via de novo pathway; (S)-dihydroorotate from bicarbonate: step 1/3. Functionally, large subunit of the glutamine-dependent carbamoyl phosphate synthetase (CPSase). CPSase catalyzes the formation of carbamoyl phosphate from the ammonia moiety of glutamine, carbonate, and phosphate donated by ATP, constituting the first step of 2 biosynthetic pathways, one leading to arginine and/or urea and the other to pyrimidine nucleotides. The large subunit (synthetase) binds the substrates ammonia (free or transferred from glutamine from the small subunit), hydrogencarbonate and ATP and carries out an ATP-coupled ligase reaction, activating hydrogencarbonate by forming carboxy phosphate which reacts with ammonia to form carbamoyl phosphate. This Pyrococcus furiosus (strain ATCC 43587 / DSM 3638 / JCM 8422 / Vc1) protein is Carbamoyl phosphate synthase large chain.